Consider the following 274-residue polypeptide: Nitrogenase iron protein (274 aa).

8–15 (GKGGIGKS) contributes to the ATP binding site. Cysteine 94 provides a ligand contact to [4Fe-4S] cluster. Position 97 is an ADP-ribosylarginine; by dinitrogenase reductase ADP-ribosyltransferase (arginine 97). Residue cysteine 131 coordinates [4Fe-4S] cluster.

Belongs to the NifH/BchL/ChlL family. In terms of assembly, homodimer. [4Fe-4S] cluster is required as a cofactor. Post-translationally, the reversible ADP-ribosylation of Arg-97 inactivates the nitrogenase reductase and regulates nitrogenase activity.

The catalysed reaction is N2 + 8 reduced [2Fe-2S]-[ferredoxin] + 16 ATP + 16 H2O = H2 + 8 oxidized [2Fe-2S]-[ferredoxin] + 2 NH4(+) + 16 ADP + 16 phosphate + 6 H(+). In terms of biological role, the key enzymatic reactions in nitrogen fixation are catalyzed by the nitrogenase complex, which has 2 components: the iron protein and the molybdenum-iron protein. The chain is Nitrogenase iron protein from Chlorobium luteolum (strain DSM 273 / BCRC 81028 / 2530) (Pelodictyon luteolum).